The sequence spans 441 residues: Ribosomal protein uS12 methylthiotransferase RimO (441 aa).

The region spanning 6 to 116 (PKVGFVSLGC…VMTAVHANLP (111 aa)) is the MTTase N-terminal domain. Cys15, Cys51, Cys80, Cys147, Cys151, and Cys154 together coordinate [4Fe-4S] cluster. Residues 133 to 370 (LTPQHYAYLK…MEVQESISAE (238 aa)) form the Radical SAM core domain. The TRAM domain maps to 373-439 (RRKIGRIETV…GHDLWAAPPA (67 aa)).

It belongs to the methylthiotransferase family. RimO subfamily. [4Fe-4S] cluster is required as a cofactor.

The protein localises to the cytoplasm. It carries out the reaction L-aspartate(89)-[ribosomal protein uS12]-hydrogen + (sulfur carrier)-SH + AH2 + 2 S-adenosyl-L-methionine = 3-methylsulfanyl-L-aspartate(89)-[ribosomal protein uS12]-hydrogen + (sulfur carrier)-H + 5'-deoxyadenosine + L-methionine + A + S-adenosyl-L-homocysteine + 2 H(+). Functionally, catalyzes the methylthiolation of an aspartic acid residue of ribosomal protein uS12. The polypeptide is Ribosomal protein uS12 methylthiotransferase RimO (Methylobacillus flagellatus (strain ATCC 51484 / DSM 6875 / VKM B-1610 / KT)).